A 216-amino-acid chain; its full sequence is Thioredoxin-like 2, chloroplastic (216 aa).

The transit peptide at 1-58 (MAEALLPLPRRLVVTASTPACSSASSSTSPSPHCLLSRANPRPPRLAAPSPPRHRRLK) directs the protein to the chloroplast. Residues 19–40 (PACSSASSSTSPSPHCLLSRAN) are compositionally biased toward low complexity. The disordered stretch occupies residues 19–70 (PACSSASSSTSPSPHCLLSRANPRPPRLAAPSPPRHRRLKAHAAVSDKSEQP). The span at 41-51 (PRPPRLAAPSP) shows a compositional bias: pro residues. The Thioredoxin domain maps to 61 to 188 (AAVSDKSEQP…LKDAIAVHNT (128 aa)). Catalysis depends on nucleophile residues Cys111 and Cys114. Cys111 and Cys114 are joined by a disulfide.

This sequence belongs to the thioredoxin family.

It localises to the plastid. The protein localises to the chloroplast. Probable thiol-disulfide oxidoreductase that may participate in various redox reactions. This Oryza sativa subsp. japonica (Rice) protein is Thioredoxin-like 2, chloroplastic.